A 410-amino-acid polypeptide reads, in one-letter code: Zinc transporter ttm-1 (410 aa).

Low complexity-rich tracts occupy residues 1–13 (MTIS…SIRL) and 35–46 (SVSSSDSGVSAD). The interval 1-94 (MTISMISPSS…GAHKHSHDEK (94 aa)) is disordered. At 1–103 (MTISMISPSS…KYQKGRRAEK (103 aa)) the chain is on the cytoplasmic side. The span at 50–69 (HHHHGHGHGHSHGGHGHSHT) shows a compositional bias: basic residues. Residues 104–124 (VLWAVAALSAVFIAAEFVGGF) form a helical membrane-spanning segment. Residues 125–129 (WAQSL) lie on the Extracellular side of the membrane. The chain crosses the membrane as a helical span at residues 130–150 (AIMTDAGHMLSDLLSFIISIF). Over 151-171 (AIRCARLPASKRLSFGYERAE) the chain is Cytoplasmic. The chain crosses the membrane as a helical span at residues 172 to 192 (VLGALTSVIILWVLTTVLVVV). The Extracellular portion of the chain corresponds to 193-208 (AIQRIVNNEHEVDADV). The chain crosses the membrane as a helical span at residues 209 to 229 (MLITAGVGVLFNIVMGLVLHF). The Cytoplasmic segment spans residues 230 to 258 (GTGGHGHTHGGHSSHGHAHDGKNVNVRAA). A helical membrane pass occupies residues 259 to 279 (LIHVIGDLVQSIGVLIAALII). A topological domain (extracellular) is located at residue R280. Residues 281–301 (FTGWTLADPICTFLFSIIVLF) form a helical membrane-spanning segment. Residues 302 to 410 (TTVTVMRDIF…CDTCQQQETA (109 aa)) are Cytoplasmic-facing.

This sequence belongs to the cation diffusion facilitator (CDF) transporter (TC 2.A.4) family. SLC30A subfamily. Isoform a: Expressed in the hypodermis and the intestine. Isoform b: Expressed in the intestine, head neurons, seam cells, hypodermis, and the vulva.

Its subcellular location is the cytoplasmic vesicle membrane. It localises to the apical cell membrane. Promotes excretion of zinc from intestinal cells into the intestinal lumen in response to increased dietary zinc. Involved in cadmium resistance, possibly by promoting its transport from cells. Involved in resistance to B.thuringiensis pore-forming toxin Cry5B downstream of the sek-1 and pmk-1 MAPK kinase pathway. The polypeptide is Zinc transporter ttm-1 (Caenorhabditis elegans).